The primary structure comprises 259 residues: Trans-aconitate 2-methyltransferase (259 aa).

The protein belongs to the methyltransferase superfamily. Tam family.

Its subcellular location is the cytoplasm. The catalysed reaction is trans-aconitate + S-adenosyl-L-methionine = (E)-3-(methoxycarbonyl)pent-2-enedioate + S-adenosyl-L-homocysteine. Its function is as follows. Catalyzes the S-adenosylmethionine monomethyl esterification of trans-aconitate. The protein is Trans-aconitate 2-methyltransferase of Variovorax paradoxus (strain S110).